We begin with the raw amino-acid sequence, 194 residues long: Fe/S biogenesis protein NfuA (194 aa).

[4Fe-4S] cluster-binding residues include Cys152 and Cys155.

Belongs to the NfuA family. In terms of assembly, homodimer. [4Fe-4S] cluster is required as a cofactor.

Its function is as follows. Involved in iron-sulfur cluster biogenesis. Binds a 4Fe-4S cluster, can transfer this cluster to apoproteins, and thereby intervenes in the maturation of Fe/S proteins. Could also act as a scaffold/chaperone for damaged Fe/S proteins. This is Fe/S biogenesis protein NfuA from Pseudomonas fluorescens (strain Pf0-1).